The chain runs to 349 residues: MTKYIGYVGTYTKGGSEGIYSFELDTEKKALSEPKLAAKLGNPTYVATNKNNTILYSIEKADGQGGVAAYQIDKNSGELTFLNHQLIDGPSPCHVSVDDQNQFVLTANYHSGKVHVFPVQEDGSLQSPVSEAAHTGKGPHERQEKPHTHYAGFTPEHNYVVAVDLGIDKLYTYKLKDGVLTESGSHSFAPGAGPRHIAFHPKEKYAYVMTELSNEVIALEYNPTAGEFREIQVVSAIPDDFTDNSQGSAIHVTQDGRFVYVANRGHDSIAVFEVNQYSGELAFVERVSTEGNWPRDFVFDPTEGFLVASNEETGNLVLFERDKETGRLTLLPSTVSVPYPVCVKFLHQV.

Residues 125–151 are disordered; sequence LQSPVSEAAHTGKGPHERQEKPHTHYA. Over residues 138-147 the composition is skewed to basic and acidic residues; the sequence is GPHERQEKPH.

This sequence belongs to the cycloisomerase 2 family.

It catalyses the reaction 6-phospho-D-glucono-1,5-lactone + H2O = 6-phospho-D-gluconate + H(+). It participates in carbohydrate degradation; pentose phosphate pathway; D-ribulose 5-phosphate from D-glucose 6-phosphate (oxidative stage): step 2/3. Its function is as follows. Catalyzes the hydrolysis of 6-phosphogluconolactone to 6-phosphogluconate. This is 6-phosphogluconolactonase (pgl) from Bacillus subtilis (strain 168).